Consider the following 418-residue polypeptide: Gene 68 protein (418 aa).

Disordered stretches follow at residues 230-304 (IPAP…IHTL) and 353-418 (DTFE…ERRA). The segment covering 241–250 (RPSEGGDARP) has biased composition (basic and acidic residues). A compositionally biased stretch (basic residues) spans 257–266 (SRARSVHGRR). Residues 353–369 (DTFEDNRRDELRHDDSR) are compositionally biased toward basic and acidic residues. Residues 395-404 (PHLRRSRGRG) show a composition bias toward basic residues.

The protein belongs to the herpesviridae US2 family.

This chain is Gene 68 protein, found in Equine herpesvirus 1 (strain Ab4p) (EHV-1).